The following is a 234-amino-acid chain: CKLF-like MARVEL transmembrane domain-containing protein 4 (234 aa).

Acidic residues predominate over residues 1 to 11 (MRSGEELDGFE). The interval 1 to 38 (MRSGEELDGFEGEASSTSMISGASSPYQPTTEPVSQRR) is disordered. Residues 15 to 25 (SSTSMISGASS) show a composition bias toward low complexity. An MARVEL domain is found at 49 to 176 (YLRGALGRLK…NTFLAVQKWR (128 aa)). The next 4 membrane-spanning stretches (helical) occupy residues 59 to 79 (VAQVILALIAFICIETIMACS), 85 to 105 (YFFEFVSCSAFVVTGVLLIMF), 123 to 143 (LVNTGLSAFLFFIASIVLAAL), and 151 to 171 (IAAVIFGFLATAAYAVNTFLA). At serine 194 the chain carries Phosphoserine.

Belongs to the chemokine-like factor family. In terms of assembly, interacts with PD-L1/CD274 and CMTM6. As to expression, highly expressed in testis and prostate.

The protein localises to the membrane. Functionally, acts as a backup for CMTM6 to regulate plasma membrane expression of PD-L1/CD274, an immune inhibitory ligand critical for immune tolerance to self and antitumor immunity. May protect PD-L1/CD274 from being polyubiquitinated and targeted for degradation. This chain is CKLF-like MARVEL transmembrane domain-containing protein 4, found in Homo sapiens (Human).